Here is a 140-residue protein sequence, read N- to C-terminus: Endoribonuclease YbeY (140 aa).

Zn(2+) contacts are provided by His99, His103, and His109.

This sequence belongs to the endoribonuclease YbeY family. Zn(2+) serves as cofactor.

It is found in the cytoplasm. Its function is as follows. Single strand-specific metallo-endoribonuclease involved in late-stage 70S ribosome quality control and in maturation of the 3' terminus of the 16S rRNA. The protein is Endoribonuclease YbeY of Wolinella succinogenes (strain ATCC 29543 / DSM 1740 / CCUG 13145 / JCM 31913 / LMG 7466 / NCTC 11488 / FDC 602W) (Vibrio succinogenes).